Consider the following 125-residue polypeptide: Fluoride-specific ion channel FluC (125 aa).

A run of 4 helical transmembrane segments spans residues 4-24, 35-55, 69-89, and 103-123; these read WLFV…ISEL, YGTL…FALI, LMVG…DTVV, and MGLN…LVAS. Residues Gly-75 and Thr-78 each contribute to the Na(+) site.

It belongs to the fluoride channel Fluc/FEX (TC 1.A.43) family.

Its subcellular location is the cell inner membrane. The enzyme catalyses fluoride(in) = fluoride(out). With respect to regulation, na(+) is not transported, but it plays an essential structural role and its presence is essential for fluoride channel function. Fluoride-specific ion channel. Important for reducing fluoride concentration in the cell, thus reducing its toxicity. This chain is Fluoride-specific ion channel FluC, found in Aeromonas salmonicida (strain A449).